A 62-amino-acid chain; its full sequence is Large ribosomal subunit protein uL29 (62 aa).

Belongs to the universal ribosomal protein uL29 family.

In Geobacter sulfurreducens (strain ATCC 51573 / DSM 12127 / PCA), this protein is Large ribosomal subunit protein uL29.